A 592-amino-acid polypeptide reads, in one-letter code: Thiol:disulfide interchange protein DsbD (592 aa).

The signal sequence occupies residues 1-19 (MKLIASFSIFMLMSIWSFA). 2 disulfides stabilise this stretch: Cys130–Cys136 and Cys204–Cys326. The next 8 helical transmembrane spans lie at 186–206 (IWVL…PCVF), 229–249 (FVLS…LGLV), 265–285 (IILG…FGAW), 318–338 (ISGL…LLYI), 345–365 (LLGF…LILF), 379–399 (WMNI…LMFV), 406–426 (MATD…FYVM), and 440–460 (ALVI…TIFG). The 150-residue stretch at 443-592 (IFIGLFASAM…AFAAHAKNIL (150 aa)) folds into the Thioredoxin domain. A disulfide bond links Cys508 and Cys511.

Belongs to the thioredoxin family. DsbD subfamily.

The protein localises to the cell inner membrane. The enzyme catalyses [protein]-dithiol + NAD(+) = [protein]-disulfide + NADH + H(+). The catalysed reaction is [protein]-dithiol + NADP(+) = [protein]-disulfide + NADPH + H(+). In terms of biological role, required to facilitate the formation of correct disulfide bonds in some periplasmic proteins and for the assembly of the periplasmic c-type cytochromes. Acts by transferring electrons from cytoplasmic thioredoxin to the periplasm. This transfer involves a cascade of disulfide bond formation and reduction steps. The protein is Thiol:disulfide interchange protein DsbD of Pseudoalteromonas atlantica (strain T6c / ATCC BAA-1087).